A 160-amino-acid polypeptide reads, in one-letter code: Ureidoglycolate lyase (160 aa).

This sequence belongs to the ureidoglycolate lyase family. Homodimer. Ni(2+) serves as cofactor.

It carries out the reaction (S)-ureidoglycolate = urea + glyoxylate. Its pathway is nitrogen metabolism; (S)-allantoin degradation. Functionally, catalyzes the catabolism of the allantoin degradation intermediate (S)-ureidoglycolate, generating urea and glyoxylate. Involved in the anaerobic utilization of allantoin as sole nitrogen source. Reinforces the induction of genes involved in the degradation of allantoin and glyoxylate by producing glyoxylate. In Escherichia coli (strain SMS-3-5 / SECEC), this protein is Ureidoglycolate lyase.